The sequence spans 385 residues: Putative nickel insertion protein (385 aa).

The protein belongs to the LarC family.

This is Putative nickel insertion protein from Geobacter sp. (strain M21).